The primary structure comprises 693 residues: Elongation factor G (693 aa).

In terms of domain architecture, tr-type G spans 8-282; it reads EKTRNIGIMA…AVVDYLPSPL (275 aa). Residues 17-24, 81-85, and 135-138 each bind GTP; these read AHVDAGKT, DTPGH, and NKMD.

It belongs to the TRAFAC class translation factor GTPase superfamily. Classic translation factor GTPase family. EF-G/EF-2 subfamily.

The protein localises to the cytoplasm. Its function is as follows. Catalyzes the GTP-dependent ribosomal translocation step during translation elongation. During this step, the ribosome changes from the pre-translocational (PRE) to the post-translocational (POST) state as the newly formed A-site-bound peptidyl-tRNA and P-site-bound deacylated tRNA move to the P and E sites, respectively. Catalyzes the coordinated movement of the two tRNA molecules, the mRNA and conformational changes in the ribosome. The chain is Elongation factor G from Streptococcus mutans serotype c (strain ATCC 700610 / UA159).